A 576-amino-acid chain; its full sequence is V-type ATP synthase alpha chain (576 aa).

238–245 is an ATP binding site; that stretch reads GPFGAGKT.

The protein belongs to the ATPase alpha/beta chains family.

It catalyses the reaction ATP + H2O + 4 H(+)(in) = ADP + phosphate + 5 H(+)(out). Functionally, produces ATP from ADP in the presence of a proton gradient across the membrane. The V-type alpha chain is a catalytic subunit. The polypeptide is V-type ATP synthase alpha chain (Borrelia recurrentis (strain A1)).